The chain runs to 227 residues: MHFPLPIKAVMIDLDGTLLDTAPDLATAANMMLKELGKAELPLETIQSYIGKGIEKLVKRSLTGDLDGEPDSDLLRRAMPLYERSYEKTLYVDTRAYPGVREGLNALRAGGFRLACVTNKAEAFTLPLLRAAELLDYFDIVVSGDSLPKKKPDPMPLLHACERFEIQPHDMLLVGDSLNDAQAARAAGSHVFCVPYGYNEGRDVYELDCDAIVPSLYEATKLIQKSS.

Asp-13 (nucleophile) is an active-site residue. Asp-13, Asp-15, and Asp-176 together coordinate Mg(2+).

Belongs to the HAD-like hydrolase superfamily. CbbY/CbbZ/Gph/YieH family. The cofactor is Mg(2+).

It catalyses the reaction 2-phosphoglycolate + H2O = glycolate + phosphate. It functions in the pathway organic acid metabolism; glycolate biosynthesis; glycolate from 2-phosphoglycolate: step 1/1. Specifically catalyzes the dephosphorylation of 2-phosphoglycolate. Is involved in the dissimilation of the intracellular 2-phosphoglycolate formed during the DNA repair of 3'-phosphoglycolate ends, a major class of DNA lesions induced by oxidative stress. The chain is Phosphoglycolate phosphatase from Nitrosospira multiformis (strain ATCC 25196 / NCIMB 11849 / C 71).